Here is a 201-residue protein sequence, read N- to C-terminus: Syndecan-2 (201 aa).

The N-terminal stretch at 1–18 (MQRAWILLTLGLMACVSA) is a signal peptide. Over 19-144 (ETRAELTSDK…HSDNLFKRTE (126 aa)) the chain is Extracellular. Residues S41, S55, and S57 are each glycosylated (O-linked (Xyl...) (glycosaminoglycan) serine). Disordered regions lie at residues 42-69 (GLYPIDDDDYSSASGSGAYEDKGSPDLT) and 88-129 (TMTL…KSTD). Residues 90–102 (TLKTQSITPTQTE) show a composition bias toward polar residues. Residues 106-123 (ETDKKEFEISEAEEKQDP) show a composition bias toward basic and acidic residues. S115 carries the post-translational modification Phosphoserine. A helical membrane pass occupies residues 145–169 (VLAAVIAGGVIGFLFAIFLILLLVY). At 170–201 (RMRKKDEGSYDLGERKPSSAAYQKAPTKEFYA) the chain is on the cytoplasmic side. The disordered stretch occupies residues 178-201 (SYDLGERKPSSAAYQKAPTKEFYA). At S187 the chain carries Phosphoserine.

It belongs to the syndecan proteoglycan family. In terms of assembly, interacts (via cytoplasmic domain) with SARM1. Forms a complex with SDCBP and PDCD6IP. O-glycosylated; contains both heparan sulfate and chondroitin sulfate.

Its subcellular location is the membrane. Its function is as follows. Cell surface proteoglycan which regulates dendritic arbor morphogenesis. This chain is Syndecan-2 (Sdc2), found in Rattus norvegicus (Rat).